We begin with the raw amino-acid sequence, 599 residues long: Putative ATP-dependent helicase YeeB (599 aa).

In terms of domain architecture, Helicase ATP-binding spans 30–207 (AFEKRNSQYL…LLPEDEELFD (178 aa)). 43-50 (APPASGKS) contributes to the ATP binding site. The DEAH box signature appears at 154-157 (DEFH). The Helicase C-terminal domain occupies 236 to 408 (QYTSAINEVL…TVNTMLKAIS (173 aa)).

This sequence belongs to the helicase family.

In Bacillus subtilis (strain 168), this protein is Putative ATP-dependent helicase YeeB (yeeB).